Here is a 453-residue protein sequence, read N- to C-terminus: Verruculogen prenyltransferase (453 aa).

E89 contributes to the substrate binding site. The dimethylallyl diphosphate site is built by R102, K194, Y196, K273, Y275, Y378, Y443, and Y447.

This sequence belongs to the tryptophan dimethylallyltransferase family.

It catalyses the reaction verruculogen + dimethylallyl diphosphate = fumitremorgin A + diphosphate. The protein operates within mycotoxin biosynthesis. Functionally, verruculogen prenyltransferase; part of the gene cluster that mediates the biosynthesis of fumitremorgins, indole alkaloids that carry not only intriguing chemical structures, but also interesting biological and pharmacological activities. The biosynthesis of fumitremorgin-type alkaloids begins by condensation of the two amino acids L-tryptophan and L-proline to brevianamide F, catalyzed by the non-ribosomal peptide synthetase ftmPS/ftmA. Brevianamide F is then prenylated by the prenyltransferase ftmPT1/ftmB in the presence of dimethylallyl diphosphate, resulting in the formation of tryprostatin B. The three cytochrome P450 monooxygenases, ftmP450-1/ftmC, ftmP450-2/ftmE and ftmP450-3/FtmG, are responsible for the conversion of tryprostatin B to 6-hydroxytryprostatin B, tryprostatin A to fumitremorgin C and fumitremorgin C to 12,13-dihydroxyfumitremorgin C, respectively. The putative methyltransferase ftmMT/ftmD is expected for the conversion of 6-hydroxytryprostatin B to tryprostatin A. FtmPT2/FtmH catalyzes the prenylation of 12,13-dihydroxyfumitre-morgin C in the presence of dimethylallyl diphosphate, resulting in the formation of fumitremorgin B. Fumitremorgin B is further converted to verruculogen by ftmOx1/ftmF via the insertion of an endoperoxide bond between the two prenyl moieties. Finally, verruculogen is further converted to fumitremorgin A by the verruculogen prenyltransferase ftmPT3. In Neosartorya fischeri (strain ATCC 1020 / DSM 3700 / CBS 544.65 / FGSC A1164 / JCM 1740 / NRRL 181 / WB 181) (Aspergillus fischerianus), this protein is Verruculogen prenyltransferase.